Here is a 574-residue protein sequence, read N- to C-terminus: MWRRIFAHELKYDQPNASSKNLILSVLNTTATKREAKDYLSKYTNDSGQHNHCLFFIRDLHKVAPAILSQFSSVIKRLGMLGLRPMFVIPPSPTHVNIQAELLDSIVTEADLKPLHLKEGLTKSRTGLYHSVFSQESRFFDIGNSNFIPIVKPYVYNEETASEFMTKDVVKFMDCLCQGNIPHIDKFFILNNAGGIPSGERNDNAHVFINLSQELEHLSSSLSHNISTLTKREPRSQNLLHRMEVYVKKDEISSLECEYHDHLENLLLMDKVLSNLAATATGLITTVKAAALSSDRKNPLVYNLLTDRSLISSSLPRFKKKDGEIDSPANMFDDHAWYELPSQQVNAAPSNSDAVLVTTVLKKGVHIKTYDYKTLTQFNSIGLPKKFHVPEKGAKPSSNSPKLDINKFKSIIDQSFKRSLDLHDYIKRINGKIATIIVIGDYEGIAILTYEGSEENSFVYLDKFAVLPHLKGSLGISDIIFNLMFKKFPNEILWRSRKDNVVNKWYFQRSVAVLDLSIDLDPEHCDEKQSQFKLFYYGNPQYAKRALRDKKRLREFMRSVRDIKPSWENEKNIS.

A mitochondrion-targeting transit peptide spans 1–13 (MWRRIFAHELKYD). The N-acetyltransferase domain maps to 392–560 (KGAKPSSNSP…KRLREFMRSV (169 aa)).

It belongs to the acetyltransferase family. Interacts with the acetylglutamate kinase chain of AGR5,6.

The protein resides in the mitochondrion. It catalyses the reaction L-glutamate + acetyl-CoA = N-acetyl-L-glutamate + CoA + H(+). The protein operates within amino-acid biosynthesis; L-arginine biosynthesis; N(2)-acetyl-L-ornithine from L-glutamate: step 1/4. With respect to regulation, feedback inhibition by L-arginine. In terms of biological role, N-acetylglutamate synthase involved in arginine biosynthesis. The chain is Amino-acid acetyltransferase, mitochondrial (ARG2) from Saccharomyces cerevisiae (strain RM11-1a) (Baker's yeast).